Consider the following 429-residue polypeptide: Endo-1,4-beta-xylanase 1 (429 aa).

An N-terminal signal peptide occupies residues 1-19 (MQTKSILTAALLAAAPASA). In terms of domain architecture, GH10 spans 43–336 (NSDQQYNRIL…KPAWTSISSV (294 aa)). Glu150 acts as the Proton donor in catalysis. The Nucleophile role is filled by Glu257. A disulfide bond links Cys286 and Cys292. Residues 364 to 395 (TTPPPISSPIVPSTTTTSAVPTTTVSPPEPEQ) are disordered. Residues 371-389 (SPIVPSTTTTSAVPTTTVS) are compositionally biased toward low complexity. A CBM1 domain is found at 393–429 (PEQTRWGQCGGIGWNGPTKCQSPWTCTRLNDWYFQCL).

The protein belongs to the glycosyl hydrolase 10 (cellulase F) family.

It localises to the secreted. The enzyme catalyses Endohydrolysis of (1-&gt;4)-beta-D-xylosidic linkages in xylans.. The protein operates within glycan degradation; xylan degradation. In terms of biological role, endo-1,4-beta-xylanase involved in the hydrolysis of xylan, a major structural heterogeneous polysaccharide found in plant biomass representing the second most abundant polysaccharide in the biosphere, after cellulose. This chain is Endo-1,4-beta-xylanase 1, found in Humicola insolens (Soft-rot fungus).